A 273-amino-acid chain; its full sequence is Putative phosphoenolpyruvate synthase regulatory protein (273 aa).

Residue 153-160 (AVSRAGKT) coordinates ADP.

This sequence belongs to the pyruvate, phosphate/water dikinase regulatory protein family. PSRP subfamily.

It catalyses the reaction [pyruvate, water dikinase] + ADP = [pyruvate, water dikinase]-phosphate + AMP + H(+). The catalysed reaction is [pyruvate, water dikinase]-phosphate + phosphate + H(+) = [pyruvate, water dikinase] + diphosphate. Bifunctional serine/threonine kinase and phosphorylase involved in the regulation of the phosphoenolpyruvate synthase (PEPS) by catalyzing its phosphorylation/dephosphorylation. The protein is Putative phosphoenolpyruvate synthase regulatory protein of Xanthomonas axonopodis pv. citri (strain 306).